The primary structure comprises 253 residues: Nurim homolog (253 aa).

The Nuclear portion of the chain corresponds to 1–2; it reads MA. Residues 3 to 30 traverse the membrane as a helical segment; the sequence is TFAKVMLLLSSVATFGYTFFVVGKLMLF. Topologically, residues 31 to 56 are perinuclear space; the sequence is LSTPRSISKAHTWIFNLLDNKSRLET. A helical membrane pass occupies residues 57–78; it reads AYGPIVFDTLYLIGFIFQHSFL. Topologically, residues 79 to 96 are nuclear; that stretch reads KSALVKNLWRKLGLAAAE. The chain crosses the membrane as a helical span at residues 97–113; that stretch reads RTIYSLTSSICLHYLLK. Residues 114-132 lie on the Perinuclear space side of the membrane; the sequence is NWLPAQSIVLWQVDVDESA. A helical transmembrane segment spans residues 133 to 161; that stretch reads PLWWTFVVTHGLGWAVIFGGSLIMDLPEL. The Nuclear portion of the chain corresponds to 162 to 188; sequence LGVKQVYYDLKEYGEPVAYKSSELRNL. Residues 189 to 207 traverse the membrane as a helical segment; that stretch reads YSHVRHPSFVGLSVILFAT. At 208–213 the chain is on the perinuclear space side; it reads NVMSLD. The helical transmembrane segment at 214–231 threads the bilayer; that stretch reads RLLLASLLTVYMYVAWST. The Nuclear portion of the chain corresponds to 232–253; sequence DDKDVAYQKQQLRNKKHELKAQ.

The protein belongs to the nurim family.

It is found in the nucleus inner membrane. The sequence is that of Nurim homolog (nrm) from Drosophila pseudoobscura pseudoobscura (Fruit fly).